Here is a 1520-residue protein sequence, read N- to C-terminus: Myosin-5 (1520 aa).

Residues 7-56 (IVGSHVWVEDPHLAWIDGEVTRIDGINVHVKTKKGKTVVTNVYFPKDTEA) form the Myosin N-terminal SH3-like domain. Residues 59-729 (GGVDDMTKLS…QMAELDARRA (671 aa)) enclose the Myosin motor domain. ATP is bound by residues 153-160 (GESGAGKT) and 206-214 (NNNSSRFGK). Actin-binding stretches follow at residues 492 to 526 (LIEKKPGGIISLLDEACMFPKSTHETFSQKLFQTF), 528 to 551 (EHERFAKPKLSRTDFTISHYAGEV), 586 to 610 (FHALHEDSSRSSKFSSIGSRFKQQL), and 610 to 632 (LHSLMESLNGTEPHYIRCIKPNN). 6 IQ domains span residues 732-761 (LGNAARVIQRQFRTCMARKNYRSIRNAAIV), 755-784 (IRNAAIVLQSFLRGEIARAVHKKLRIEAAA), 780-809 (IEAAALRVQKNFRRYVDRKSFVTTRSSTIV), 803-832 (TRSSTIVLQTGLRAMIARSEFRLRRQRKAA), 828-857 (QRKAAIVLQAHWRGRQAFSYYTRLQKAAIV), and 851-880 (LQKAAIVTQCAWRCRLARRELRMLKMAARD). A coiled-coil region spans residues 881–1047 (TGALKDAKNK…ESENKVLRQQ (167 aa)). A disordered region spans residues 1062–1100 (PKTTIIQRTPEKDTFSNGETTQLQEPETEDRPQKSLNQK). The span at 1076–1086 (FSNGETTQLQE) shows a compositional bias: polar residues. Residues 1148–1463 (NRIIETIASA…IATMRAEVSD (316 aa)) enclose the Dilute domain.

Belongs to the TRAFAC class myosin-kinesin ATPase superfamily. Myosin family. Plant myosin class XI subfamily. Homodimer. Interacts with MYOB1 and MYOB2. Interacts with PHOX1.

Its subcellular location is the cytoplasm. Myosin heavy chain that is required for the cell cycle-regulated transport of various organelles and proteins for their segregation. Functions by binding with its tail domain to receptor proteins on organelles and exerting force with its N-terminal motor domain against actin filaments, thereby transporting its cargo along polarized actin cables. Contributes to the trafficking of Golgi stacks, mitochondria and peroxisomes. Required for development of pavement cells, trichomes, and stigmatic papillae. This is Myosin-5 (XI-1) from Arabidopsis thaliana (Mouse-ear cress).